The chain runs to 526 residues: MPISLGNAFAKNFLGNAPKWYKSAILLFLVINPIAFYLDPFAAGWLLVVEFIFTLAMALKCYPLQPGGLLAIEAVLIGMTSAEQVKHELVANIEVLLLLVFMVAGIYFMKQLLLYVFTKLLIRIHSKTLLSLAFCLVSAFLSAFLDALTVIAVVISVATGFYAIYHKVSSGKEFGHQHDHTDDHSVHELSRQHLDDFRAFLRSLMMHAAIGTALGGVCTLVGEPQNLIIGEQAGWSFGEFAIRMAPVTIPVFICGLLTCILVEKCRWFGYGAKLPDAVRHIMEDYNRYEEAGRSPQDKAKLIVQAVIAIWLILGLAMHLAAVGLIGLSVIVLATSLTGINDEHSLGKAFQEALPFTALLAVFFSVVAVIIDQQLFRPVIQWVLAAEPDDQLALFYLANGLLSMVSDNVFVGTVYINEVKTALLNNAINREQFDLLAVAINTGTNLPSVATPNGQAAFLFMLTSALAPLLRLSYGRMVWMALPYTLVLGLVGFFSVELLLGPATEWFYQAGWLLPHSGAPAVLPALH.

12 helical membrane-spanning segments follow: residues Ile-25–Trp-45, Ile-52–Ile-72, Leu-89–Met-109, Leu-130–Ile-164, Leu-204–Pro-224, Ile-242–Val-262, Ala-305–Ile-325, Gln-350–Ile-370, Leu-391–Gly-411, Val-448–Leu-468, Met-479–Leu-499, and Trp-505–Leu-525.

This sequence belongs to the NhaB Na(+)/H(+) (TC 2.A.34) antiporter family.

The protein resides in the cell inner membrane. The catalysed reaction is 2 Na(+)(in) + 3 H(+)(out) = 2 Na(+)(out) + 3 H(+)(in). In terms of biological role, na(+)/H(+) antiporter that extrudes sodium in exchange for external protons. This Aeromonas salmonicida (strain A449) protein is Na(+)/H(+) antiporter NhaB.